The primary structure comprises 178 residues: Glucagon-1 (178 aa).

An N-terminal signal peptide occupies residues 1–21; sequence MFGIHSLAGVLLLVIVQRQLA. Propeptides lie at residues 83–87, 123–134, and 171–178; these read SGAPS, ESAEESRNGPMS, and SNKRQEDH.

It belongs to the glucagon family.

The protein localises to the secreted. Its function is as follows. Promotes hydrolysis of glycogen and lipids, and raises the blood sugar level. This Oncorhynchus mykiss (Rainbow trout) protein is Glucagon-1 (gcg1).